Reading from the N-terminus, the 372-residue chain is Invasion protein InvE (372 aa).

Residues 1 to 19 (MIPGSTSGISFSRILSRQT) show a composition bias toward polar residues. The tract at residues 1-46 (MIPGSTSGISFSRILSRQTSHQDATQHTDAQQAEIQQAAEDSSPGA) is disordered. Residues 21–40 (HQDATQHTDAQQAEIQQAAE) are compositionally biased toward low complexity.

Its subcellular location is the cell membrane. Functionally, involved in the triggering of intracellular events that lead to microbial internalization. These events include increase in calcium level, redistribution of actin microfilaments, and changes in the normal structure of the microvilli. Encoded within the type III secretion system (SPI-1 T3SS), it is essential for the translocation of protein effectors into host cells. Forms a complex with SipB and SipC in the presence of their chaperone SicA. Positively regulates the secretion of SPI-1 T3SS effector proteins SipB, SipC and SipD and negatively influences the secretion of SipA, SopA and SptP. The sequence is that of Invasion protein InvE (invE) from Salmonella typhimurium (strain LT2 / SGSC1412 / ATCC 700720).